The following is an 84-amino-acid chain: Toxin Cex12 (84 aa).

A signal peptide spans Met1–Ala19. Residues Asn20–Arg83 enclose the LCN-type CS-alpha/beta domain. 4 disulfides stabilise this stretch: Cys31–Cys82, Cys35–Cys58, Cys44–Cys63, and Cys48–Cys65.

It belongs to the long (4 C-C) scorpion toxin superfamily. Sodium channel inhibitor family. Beta subfamily. Expressed by the venom gland.

The protein resides in the secreted. Beta toxins bind voltage-independently at site-4 of sodium channels (Nav) and shift the voltage of activation toward more negative potentials thereby affecting sodium channel activation and promoting spontaneous and repetitive firing. This chain is Toxin Cex12, found in Centruroides exilicauda (Bark scorpion).